Here is a 1078-residue protein sequence, read N- to C-terminus: Transmembrane protein 132B (1078 aa).

At 1–903 (MFGAASRMDT…LTDLEIGMYA (903 aa)) the chain is on the extracellular side. 3 N-linked (GlcNAc...) asparagine glycosylation sites follow: asparagine 343, asparagine 366, and asparagine 381. The interval 834-887 (RGTPVGQEESTNKSTTPQSPMEGKNKLLKSGGPDAFTSFPTQGKSPDPNNPSDL) is disordered. Polar residues predominate over residues 841 to 852 (EESTNKSTTPQS). Residues 904–924 (LLCVFCLAILVFLINCVAFAW) traverse the membrane as a helical segment. At 925–1078 (KYRHKRFAVS…DYMESLQDQM (154 aa)) the chain is on the cytoplasmic side.

It belongs to the TMEM132 family.

Its subcellular location is the membrane. The protein is Transmembrane protein 132B (TMEM132B) of Homo sapiens (Human).